The primary structure comprises 388 residues: Ferrochelatase (388 aa).

Fe cation contacts are provided by His197 and Glu278.

Belongs to the ferrochelatase family.

The protein resides in the cytoplasm. It carries out the reaction heme b + 2 H(+) = protoporphyrin IX + Fe(2+). It participates in porphyrin-containing compound metabolism; protoheme biosynthesis; protoheme from protoporphyrin-IX: step 1/1. Catalyzes the ferrous insertion into protoporphyrin IX. The chain is Ferrochelatase from Thermosynechococcus vestitus (strain NIES-2133 / IAM M-273 / BP-1).